The sequence spans 541 residues: T-complex protein 1 subunit epsilon (541 aa).

A2 is modified (N-acetylalanine). K20 participates in a covalent cross-link: Glycyl lysine isopeptide (Lys-Gly) (interchain with G-Cter in SUMO2). S26 is subject to Phosphoserine. G53 lines the ADP pocket. G53 provides a ligand contact to ATP. A Mg(2+)-binding site is contributed by D104. ADP-binding residues include G105, T106, T107, and S175. Residues T106 and T107 each coordinate ATP. Residues K210, K214, K265, K275, and K279 each participate in a glycyl lysine isopeptide (Lys-Gly) (interchain with G-Cter in SUMO2) cross-link. S346 is subject to Phosphoserine. Residue K392 forms a Glycyl lysine isopeptide (Lys-Gly) (interchain with G-Cter in SUMO2) linkage. Residues G422, D492, E508, and K513 each coordinate ADP. Residue G422 participates in ATP binding. S539 bears the Phosphoserine mark.

This sequence belongs to the TCP-1 chaperonin family. In terms of assembly, component of the chaperonin-containing T-complex (TRiC), a hexadecamer composed of two identical back-to-back stacked rings enclosing a protein folding chamber. Each ring is made up of eight different subunits: TCP1/CCT1, CCT2, CCT3, CCT4, CCT5, CCT6A/CCT6, CCT7, CCT8. Interacts with PACRG. Interacts with DNAAF4. Interacts with DLEC1. Interacts with SPMAP2. In terms of processing, ubiquitinated by the DCX(DCAF12) complex specifically recognizes the diglutamate (Glu-Glu) at the C-terminus, leading to its degradation.

The protein localises to the cytoplasm. The protein resides in the cytoskeleton. It is found in the microtubule organizing center. Its subcellular location is the centrosome. The catalysed reaction is ATP + H2O = ADP + phosphate + H(+). In terms of biological role, component of the chaperonin-containing T-complex (TRiC), a molecular chaperone complex that assists the folding of actin, tubulin and other proteins upon ATP hydrolysis. The TRiC complex mediates the folding of WRAP53/TCAB1, thereby regulating telomere maintenance. As part of the TRiC complex may play a role in the assembly of BBSome, a complex involved in ciliogenesis regulating transports vesicles to the cilia. This chain is T-complex protein 1 subunit epsilon (CCT5), found in Pongo abelii (Sumatran orangutan).